The sequence spans 447 residues: Protein king tubby (447 aa).

Residues 54-84 form a disordered region; the sequence is GSPQNPDQILSNNSSSITMNSSRNNSNNMRS. The span at 62–84 shows a compositional bias: low complexity; sequence ILSNNSSSITMNSSRNNSNNMRS. Ser-136 carries the phosphoserine modification. Over residues 168–182 the composition is skewed to low complexity; sequence EGAAMEGSNGAANGS. Residues 168–191 form a disordered region; sequence EGAAMEGSNGAANGSGSVGGSGES.

Belongs to the TUB family.

The protein localises to the cytoplasm. Its subcellular location is the nucleus. It is found in the cell projection. The protein resides in the cilium membrane. It localises to the rhabdomere. The chain is Protein king tubby from Drosophila grimshawi (Hawaiian fruit fly).